The chain runs to 371 residues: Neutral protease 2 homolog MGYG_03465 (371 aa).

A signal peptide spans 1–19 (MQFVAVLAALGALVAPAAA). Residues 20–188 (YPHAPMNETL…SIHARALEKR (169 aa)) constitute a propeptide that is removed on maturation. 2 disulfides stabilise this stretch: C196–C267 and C274–C292. Residue H316 participates in Zn(2+) binding. Residue E317 is part of the active site. Positions 320 and 331 each coordinate Zn(2+).

The protein belongs to the peptidase M35 family. Requires Zn(2+) as cofactor.

It localises to the secreted. It catalyses the reaction Preferential cleavage of bonds with hydrophobic residues in P1'. Also 3-Asn-|-Gln-4 and 8-Gly-|-Ser-9 bonds in insulin B chain.. Functionally, secreted metalloproteinase that allows assimilation of proteinaceous substrates. Shows high activities on basic nuclear substrates such as histone and protamine. May be involved in virulence. This Arthroderma gypseum (strain ATCC MYA-4604 / CBS 118893) (Microsporum gypseum) protein is Neutral protease 2 homolog MGYG_03465.